Here is a 205-residue protein sequence, read N- to C-terminus: Methylthioribulose-1-phosphate dehydratase (205 aa).

Residue Cys-75 participates in substrate binding. Residues His-93 and His-95 each coordinate Zn(2+). Glu-116 serves as the catalytic Proton donor/acceptor. His-171 is a Zn(2+) binding site.

It belongs to the aldolase class II family. MtnB subfamily. Zn(2+) is required as a cofactor.

The protein localises to the cytoplasm. The catalysed reaction is 5-(methylsulfanyl)-D-ribulose 1-phosphate = 5-methylsulfanyl-2,3-dioxopentyl phosphate + H2O. The protein operates within amino-acid biosynthesis; L-methionine biosynthesis via salvage pathway; L-methionine from S-methyl-5-thio-alpha-D-ribose 1-phosphate: step 2/6. In terms of biological role, catalyzes the dehydration of methylthioribulose-1-phosphate (MTRu-1-P) into 2,3-diketo-5-methylthiopentyl-1-phosphate (DK-MTP-1-P). The protein is Methylthioribulose-1-phosphate dehydratase of Kluyveromyces lactis (strain ATCC 8585 / CBS 2359 / DSM 70799 / NBRC 1267 / NRRL Y-1140 / WM37) (Yeast).